The primary structure comprises 62 residues: Cuticle protein 6.4 (62 aa).

Its function is as follows. Component of the cuticle of migratory locust which contains more than 100 different structural proteins. The protein is Cuticle protein 6.4 of Locusta migratoria (Migratory locust).